Consider the following 168-residue polypeptide: Large ribosomal subunit protein uL10 (168 aa).

It belongs to the universal ribosomal protein uL10 family. Part of the ribosomal stalk of the 50S ribosomal subunit. The N-terminus interacts with L11 and the large rRNA to form the base of the stalk. The C-terminus forms an elongated spine to which L12 dimers bind in a sequential fashion forming a multimeric L10(L12)X complex.

In terms of biological role, forms part of the ribosomal stalk, playing a central role in the interaction of the ribosome with GTP-bound translation factors. This chain is Large ribosomal subunit protein uL10, found in Acidovorax ebreus (strain TPSY) (Diaphorobacter sp. (strain TPSY)).